The following is an 838-amino-acid chain: V-type proton ATPase 116 kDa subunit a 1 (838 aa).

Residues 1–388 lie on the Cytoplasmic side of the membrane; the sequence is MGELFRSEEM…DAYGIGTYRE (388 aa). A helical transmembrane segment spans residues 389 to 407; sequence INPAPYTIITFPFLFAVMF. At 408–409 the chain is on the vacuolar side; the sequence is GD. A helical transmembrane segment spans residues 410-426; it reads FGHGILMTLIAIWMVLR. Residues 427–441 lie on the Cytoplasmic side of the membrane; it reads ESRILSQKSDNEMFS. Residues 442 to 471 form a helical membrane-spanning segment; the sequence is TVFSGRYIILLMGLFSTYTGLIYNDCFSKS. The Vacuolar segment spans residues 472 to 535; that stretch reads LNMFGSSWSV…ANNKLAFLNS (64 aa). The helical transmembrane segment at 536-555 threads the bilayer; sequence FKMKMSVILGIIHMLFGVML. Topologically, residues 556 to 573 are cytoplasmic; sequence SLLNHIYFKKPLNIYLGF. The chain crosses the membrane as a helical span at residues 574-594; the sequence is IPEMIFMSSLFGYLVILIFYK. Residues 595–639 are Vacuolar-facing; sequence WTAYDAHTSKEAPSPLIHFINMFLFSYGDTSNKMLYRGQKGIQCF. Residues 640–659 form a helical membrane-spanning segment; that stretch reads LVVVALLCVPWMLVAKPLVL. Topologically, residues 660–725 are cytoplasmic; that stretch reads RHQYLRRKHL…DTVVYQAIHT (66 aa). A helical membrane pass occupies residues 726–750; that stretch reads IEYCLGCISNTASYLRLWALSLAHA. Residues 751-771 are Vacuolar-facing; sequence QLSEVLWTMVIHTGLSVRSLA. Residues 772 to 810 form a helical membrane-spanning segment; the sequence is GGFGLVFIFAAFATLTVAILLVMEGLSAFLHALRLHWIE. At 811-838 the chain is on the cytoplasmic side; sequence FQNKFYTGTGFKFLPFSFDPIREGKFDD.

It belongs to the V-ATPase 116 kDa subunit family. As to quaternary structure, V-ATPase is a heteromultimeric enzyme made up of two complexes: the ATP-hydrolytic V1 complex and the proton translocation V0 complex. The V1 complex consists of three catalytic AB heterodimers that form a heterohexamer, three peripheral stalks each consisting of EG heterodimers, one central rotor including subunits D and F, and the regulatory subunits C and H. The proton translocation complex V0 consists of the proton transport subunit a, a ring of proteolipid subunits c9c'', rotary subunit d, subunits e and f, and two accessory subunits. In terms of tissue distribution, detected in brain (at protein level). Highest expression in brain, intermediate levels in kidney, and relatively low levels in bone and liver.

Its subcellular location is the cytoplasmic vesicle. It localises to the clathrin-coated vesicle membrane. The protein localises to the secretory vesicle. It is found in the synaptic vesicle membrane. The protein resides in the melanosome. Subunit of the V0 complex of vacuolar(H+)-ATPase (V-ATPase), a multisubunit enzyme composed of a peripheral complex (V1) that hydrolyzes ATP and a membrane integral complex (V0) that translocates protons. V-ATPase is responsible for acidifying and maintaining the pH of intracellular compartments and in some cell types, is targeted to the plasma membrane, where it is responsible for acidifying the extracellular environment. Required for assembly and activity of the vacuolar ATPase. This Gallus gallus (Chicken) protein is V-type proton ATPase 116 kDa subunit a 1 (ATP6V0A1).